Here is a 78-residue protein sequence, read N- to C-terminus: Large ribosomal subunit protein bL28 (78 aa).

It belongs to the bacterial ribosomal protein bL28 family.

This is Large ribosomal subunit protein bL28 from Escherichia coli O139:H28 (strain E24377A / ETEC).